The following is a 434-amino-acid chain: [Pyruvate dehydrogenase (acetyl-transferring)] kinase isozyme 1, mitochondrial (434 aa).

The transit peptide at 1 to 26 directs the protein to the mitochondrion; sequence MRLARLLRGGTSVRPLCAVPCASRSL. A Phosphotyrosine; by FGFR1 modification is found at Tyr136. Residues 161 to 391 enclose the Histidine kinase domain; it reads TEYKESFGVD…DAVIYIKALS (231 aa). Residue Tyr241 is modified to Phosphotyrosine; by FGFR1, ABL1, FLT3 and JAK2. A Phosphotyrosine; by FGFR1 modification is found at Tyr242. Residues 277 to 284, Asp316, 335 to 336, and 352 to 357 each bind ATP; these read ELFKNAMR, ST, and GFGYGL. Residue Thr336 is modified to Phosphothreonine. The residue at position 403 (Lys403) is an N6-succinyllysine.

It belongs to the PDK/BCKDK protein kinase family. As to quaternary structure, homodimer, and heterodimer with PDK2. Interacts with the pyruvate dehydrogenase complex subunit DLAT, and is part of the multimeric pyruvate dehydrogenase complex that contains multiple copies of pyruvate dehydrogenase (E1), dihydrolipoamide acetyltransferase (DLAT, E2) and lipoamide dehydrogenase (DLD, E3). Interacts with phosphoglycerate kinase PGK1; the interaction is direct, occurs under hypoxic conditions and leads to PDK1-mediated inhibition of pyruvate dehydrogenase complex activity. Post-translationally, phosphorylated by constitutively activated ABL1, FGFR1, FLT3 and JAK2 (in vitro), and this may also occur in cancer cells that express constitutively activated ABL1, FGFR1, FLT3 and JAK2. Phosphorylation at Tyr-241 and Tyr-242 strongly increases kinase activity, while phosphorylation at Tyr-136 has a lesser effect. Phosphorylated under hypoxic conditions at Thr-336 by phosphoglycerate kinase PGK1 which has an activating effect.

It localises to the mitochondrion matrix. The catalysed reaction is L-seryl-[pyruvate dehydrogenase E1 alpha subunit] + ATP = O-phospho-L-seryl-[pyruvate dehydrogenase E1 alpha subunit] + ADP + H(+). Kinase that plays a key role in regulation of glucose and fatty acid metabolism and homeostasis via phosphorylation of the pyruvate dehydrogenase subunits PDHA1 and PDHA2. This inhibits pyruvate dehydrogenase activity, and thereby regulates metabolite flux through the tricarboxylic acid cycle, down-regulates aerobic respiration and inhibits the formation of acetyl-coenzyme A from pyruvate. Plays an important role in cellular responses to hypoxia and is important for cell proliferation under hypoxia. This Mus musculus (Mouse) protein is [Pyruvate dehydrogenase (acetyl-transferring)] kinase isozyme 1, mitochondrial (Pdk1).